The following is a 631-amino-acid chain: Glutamine--fructose-6-phosphate aminotransferase [isomerizing] (631 aa).

Cysteine 2 serves as the catalytic Nucleophile; for GATase activity. A Glutamine amidotransferase type-2 domain is found at 2–225; it reads CGIVGYIGTQ…NGEIARLTPL (224 aa). SIS domains follow at residues 298–446 and 480–621; these read LDPQ…QRHS and LAHE…VDQP. Lysine 626 serves as the catalytic For Fru-6P isomerization activity.

In terms of assembly, homodimer.

Its subcellular location is the cytoplasm. The catalysed reaction is D-fructose 6-phosphate + L-glutamine = D-glucosamine 6-phosphate + L-glutamate. Catalyzes the first step in hexosamine metabolism, converting fructose-6P into glucosamine-6P using glutamine as a nitrogen source. In Synechocystis sp. (strain ATCC 27184 / PCC 6803 / Kazusa), this protein is Glutamine--fructose-6-phosphate aminotransferase [isomerizing].